Consider the following 572-residue polypeptide: Acetyl-coenzyme A synthetase (572 aa).

CoA is bound at residue Thr-260. ATP contacts are provided by residues 333–335, 354–359, Asp-440, and Arg-455; these read GEP and DTWWMT. Ser-463 is a CoA binding site. An ATP-binding site is contributed by Arg-466. Mg(2+) contacts are provided by Val-477, His-479, and Ile-482. Position 524 (Lys-524) interacts with CoA. Position 549 is an N6-acetyllysine (Lys-549).

The protein belongs to the ATP-dependent AMP-binding enzyme family. In terms of assembly, interacts with FloT. Mg(2+) serves as cofactor. Acetylated. Deacetylation by the SIR2-homolog deacetylase activates the enzyme.

The protein localises to the cell membrane. It is found in the membrane raft. It catalyses the reaction acetate + ATP + CoA = acetyl-CoA + AMP + diphosphate. Its function is as follows. Catalyzes the conversion of acetate into acetyl-CoA (AcCoA), an essential intermediate at the junction of anabolic and catabolic pathways. AcsA undergoes a two-step reaction. In the first half reaction, AcsA combines acetate with ATP to form acetyl-adenylate (AcAMP) intermediate. In the second half reaction, it can then transfer the acetyl group from AcAMP to the sulfhydryl group of CoA, forming the product AcCoA. Has a role in growth and sporulation on acetate. This Bacillus subtilis (strain 168) protein is Acetyl-coenzyme A synthetase (acsA).